Here is a 314-residue protein sequence, read N- to C-terminus: 3'-5' exoribonuclease YhaM (314 aa).

The 117-residue stretch at 163–279 (HVVSMLDLAK…LHYIDNLDAK (117 aa)) folds into the HD domain.

It belongs to the YhaM family.

Its function is as follows. Shows a 3'-5' exoribonuclease activity. This chain is 3'-5' exoribonuclease YhaM, found in Bacillus thuringiensis (strain Al Hakam).